A 152-amino-acid chain; its full sequence is Large-conductance mechanosensitive channel (152 aa).

Helical transmembrane passes span 26–46 (VLDLAVGVVIGAAFSAIVGSA), 50–70 (ILTPFIGLITGGVDFSNLFIT), and 92–112 (IGVFLNAVIQFLIIAFFIFWL).

It belongs to the MscL family. In terms of assembly, homopentamer.

The protein resides in the cell inner membrane. Functionally, channel that opens in response to stretch forces in the membrane lipid bilayer. May participate in the regulation of osmotic pressure changes within the cell. The polypeptide is Large-conductance mechanosensitive channel (Gluconobacter oxydans (strain 621H) (Gluconobacter suboxydans)).